Here is a 466-residue protein sequence, read N- to C-terminus: Putative proline/betaine transporter (466 aa).

12 helical membrane passes run 20-42, 63-83, 91-111, 116-136, 164-184, 191-211, 239-259, 285-305, 313-332, 337-354, 377-397, and 405-425; these read VVATGIGNAMEWFDFGVYAYTTA, FAALAIAFLLRPIGGVVFGII, VVLTSTIILMAFSTLTIGLLP, IGLWAPILLLLARVLQGFSTG, IGTLSGYIAASIMIAVLTFFL, SFGWRIPFLLGLFLGLFGLYL, IIRFYYIDIFVCFVAVVFFNV, VLITCVMAIMIPLALMFGKLA, VFLIGTGGLTLFSIIAFMLL, FVVIVIGIFILGFFLSTY, VTFNISVSIFGGTTPLVATWL, and LAPAYYLTAISVIGFLVITFL.

The protein belongs to the major facilitator superfamily. Metabolite:H+ Symporter (MHS) family (TC 2.A.1.6) family.

It is found in the cell membrane. Its function is as follows. May be a proton symporter involved in the uptake of osmolytes such as proline and glycine betaine. The chain is Putative proline/betaine transporter (proP) from Staphylococcus aureus (strain MSSA476).